The following is a 127-amino-acid chain: Large ribosomal subunit protein bL17 (127 aa).

This sequence belongs to the bacterial ribosomal protein bL17 family. As to quaternary structure, part of the 50S ribosomal subunit. Contacts protein L32.

The sequence is that of Large ribosomal subunit protein bL17 from Alcanivorax borkumensis (strain ATCC 700651 / DSM 11573 / NCIMB 13689 / SK2).